Here is a 129-residue protein sequence, read N- to C-terminus: Small ribosomal subunit protein uS9 (129 aa).

The protein belongs to the universal ribosomal protein uS9 family.

The sequence is that of Small ribosomal subunit protein uS9 from Pelodictyon phaeoclathratiforme (strain DSM 5477 / BU-1).